The following is a 240-amino-acid chain: Adenosine 5'-phosphosulfate reductase (240 aa).

[4Fe-4S] cluster-binding residues include cysteine 125, cysteine 126, cysteine 208, and cysteine 211. Cysteine 234 functions as the Nucleophile; cysteine thiosulfonate intermediate in the catalytic mechanism.

It belongs to the PAPS reductase family. CysH subfamily. [4Fe-4S] cluster serves as cofactor.

Its subcellular location is the cytoplasm. The enzyme catalyses [thioredoxin]-disulfide + sulfite + AMP + 2 H(+) = adenosine 5'-phosphosulfate + [thioredoxin]-dithiol. It participates in sulfur metabolism; hydrogen sulfide biosynthesis; sulfite from sulfate. In terms of biological role, catalyzes the formation of sulfite from adenosine 5'-phosphosulfate (APS) using thioredoxin as an electron donor. In Oceanobacillus iheyensis (strain DSM 14371 / CIP 107618 / JCM 11309 / KCTC 3954 / HTE831), this protein is Adenosine 5'-phosphosulfate reductase.